We begin with the raw amino-acid sequence, 783 residues long: MESPGESGAGSPGAPSPSSFTTGHLAREKPAQDPLYDVPNASGGQAGGPQRPGRVVSLRERLLLTRPVWLQLQANAAAALHMLRTEPPGTFLVRKSNTRQCQALCMRLPEASGPSFVSSHYILESPGGVSLEGSELMFPDLVQLICAYCHTRDILLLPLQLPRAIHHAATHKELEAISHLGIEFWSSSLNIKAQRGPAGGPVLPQLKARSPQELDQGTGAALCFFNPLFPGDLGPTKREKFKRSFKVRVSTETSSPLSPPAVPPPPVPVLPGAVPSQTERLPPCQLLRRESSVGYRVPAGSGPSLPPMPSLQEVDCGSPSSSEEEGVPGSRGSPATSPHLGRRRPLLRSMSAAFCSLLAPERQVGRAAAALMQDRHTAAGQLVQDLLTQVRAGPEPQELQGIRQALSRARAMLSAELGPEKLLSPKRLEHVLEKSLHCSVLKPLRPILAARLRRRLAADGSLGRLAEGLRLARAQGPGAFGSHLSLPSPVELEQVRQKLLQLLRTYSPSAQVKRLLQACKLLYMALRTQEGEGAGADEFLPLLSLVLAHCDLPELLLEAEYMSELLEPSLLTGEGGYYLTSLSASLALLSGLGQAHTLPLSPVQELRRSLSLWEQRRLPATHCFQHLLRVAYQDPSSGCTSKTLAVPPEASIATLNQLCATKFRVTQPNTFGLFLYKEQGYHRLPPGALAHRLPTTGYLVYRRAEWPETQGAVTEEEGSGQSEARSRGEEQGCQGDGDAGVKASPRDIREQSETTAEGGQGQAQEGPAQPGEPEAEGSRAAEE.

Met1 is modified (N-acetylmethionine). Residues Met1–Gly53 form a disordered region. A phosphoserine mark is found at Ser3 and Ser16. Position 36 is a phosphotyrosine; by ABL1 and ABL2 (Tyr36). The SH2 domain maps to Trp69–Arg163. Phosphoserine occurs at positions 210, 258, 333, and 337. Disordered regions lie at residues Ser250–Pro282 and Tyr295–Arg342. Positions Leu257–Val269 are enriched in pro residues. The segment at Gly294–Arg727 is ras and 14-3-3 protein binding region. Residues Gly317–Pro334 show a composition bias toward low complexity. Position 351 is a phosphoserine; by PKD/PRKD1 (Ser351). The VPS9 domain maps to Leu456 to Leu598. Residues Ser609 and Ser611 each carry the phosphoserine modification. Residues Phe624–Trp706 enclose the Ras-associating domain. Arg692 is subject to Omega-N-methylarginine. Positions Thr709–Glu783 are disordered. Residues Gln762–Glu772 are compositionally biased toward low complexity.

Belongs to the RIN (Ras interaction/interference) family. Interacts with the GTP-bound form of Ras proteins (NRAS, HRAS and KRAS). This interaction prevents the association between RAF1 and Ras. Interacts with 14-3-3 proteins YWHAB, YWHAE and YWHAZ when phosphorylated on Ser-351. Interacts with the SH3 domain of ABL1 and ABL2. Interacts with RAB5A. The interaction with Ras is probably regulated and antagonized by the interaction with 14-3-3 proteins. The interaction with 14-3-3 proteins is regulated by phosphorylation on Ser-351. Phosphorylated on tyrosine residues by ABL1 and ABL2. Phosphorylation at Ser-351 by PRKD1 induces interaction with 14-3-3 proteins. In terms of tissue distribution, expressed in all tissues examined with high levels in brain, placenta and pancreas.

Its subcellular location is the cytoplasm. The protein resides in the membrane. It localises to the cytoskeleton. Its function is as follows. Ras effector protein, which may serve as an inhibitory modulator of neuronal plasticity in aversive memory formation. Can affect Ras signaling at different levels. First, by competing with RAF1 protein for binding to activated Ras. Second, by enhancing signaling from ABL1 and ABL2, which regulate cytoskeletal remodeling. Third, by activating RAB5A, possibly by functioning as a guanine nucleotide exchange factor (GEF) for RAB5A, by exchanging bound GDP for free GTP, and facilitating Ras-activated receptor endocytosis. This chain is Ras and Rab interactor 1 (RIN1), found in Homo sapiens (Human).